A 442-amino-acid polypeptide reads, in one-letter code: uncharacterized protein (442 aa).

7 helical membrane passes run 209–229 (FNIW…AYFY), 247–267 (IFFL…HTFS), 284–304 (VGIS…AFVC), 308–328 (LRFI…YTPW), 342–362 (IFFF…MFYI), 374–394 (PVFK…LHIP), and 402–422 (FDII…GVAF).

Its subcellular location is the membrane. This is an uncharacterized protein from Schizosaccharomyces pombe (strain 972 / ATCC 24843) (Fission yeast).